Here is an 805-residue protein sequence, read N- to C-terminus: Cell division cycle protein 48 homolog (805 aa).

ATP is bound by residues 249-256 and 522-529; these read GPPGSGKT and GPPGCGKT. A disordered region spans residues 783-805; the sequence is GATAAADPFATSNAAADDDDLYS.

It belongs to the AAA ATPase family.

Its function is as follows. Probably functions in cell division and growth processes. The protein is Cell division cycle protein 48 homolog (CAFP) of Capsicum annuum (Capsicum pepper).